The following is a 254-amino-acid chain: Anti-sigma-M factor RsmA (254 aa).

The Cytoplasmic segment spans residues 1 to 112; it reads MSAADKDPDK…AARPHVHPVR (112 aa). The helical transmembrane segment at 113–133 threads the bilayer; it reads MIAGAAGLCAVATAIGVGAVV. Topologically, residues 134-254 are extracellular; the sequence is DAPPPAPSAP…LLASTVVPRA (121 aa).

As to quaternary structure, interacts with ECF RNA polymerase sigma factor SigM; this should inhibit the interaction of SigM with the RNA polymerase catalytic core. Probably cleaved within the membrane by Rip1 near the cytoplasmic membrane interface.

It localises to the cell membrane. In terms of biological role, an anti-sigma factor for extracytoplasmic function (ECF) sigma factor SigM. ECF sigma factors are held in an inactive form by an anti-sigma factor until released by regulated intramembrane proteolysis (RIP). RIP occurs when an extracytoplasmic signal triggers a concerted proteolytic cascade to transmit information and elicit cellular responses. The membrane-spanning regulatory substrate protein is first cut extracytoplasmically (site-1 protease, S1P), then within the membrane itself (site-2 protease, S2P, Rip1), while cytoplasmic proteases finish degrading the regulatory protein, liberating the sigma factor. In Mycobacterium tuberculosis (strain ATCC 35801 / TMC 107 / Erdman), this protein is Anti-sigma-M factor RsmA (rsmA).